A 779-amino-acid chain; its full sequence is Coenzyme PQQ synthesis protein F (779 aa).

Zn(2+) is bound at residue H57. The active-site Proton acceptor is E60. The Zn(2+) site is built by H61 and E138.

This sequence belongs to the peptidase M16 family. Zn(2+) is required as a cofactor.

The protein operates within cofactor biosynthesis; pyrroloquinoline quinone biosynthesis. Functionally, required for coenzyme pyrroloquinoline quinone (PQQ) biosynthesis. It is thought that this protein is a protease that cleaves peptides bond in a small peptide (gene pqqA), providing the glutamate and tyrosine residues which are necessary for the synthesis of PQQ. In Pseudomonas syringae pv. tomato (strain ATCC BAA-871 / DC3000), this protein is Coenzyme PQQ synthesis protein F (pqqF).